A 175-amino-acid chain; its full sequence is Shikimate kinase (175 aa).

ATP is bound at residue 12-17 (GAGKTT). Thr16 contributes to the Mg(2+) binding site. Substrate is bound by residues Asp34, Arg58, and Gly80. Arg117 lines the ATP pocket. Residue Arg136 participates in substrate binding.

Belongs to the shikimate kinase family. Monomer. The cofactor is Mg(2+).

The protein localises to the cytoplasm. It carries out the reaction shikimate + ATP = 3-phosphoshikimate + ADP + H(+). Its pathway is metabolic intermediate biosynthesis; chorismate biosynthesis; chorismate from D-erythrose 4-phosphate and phosphoenolpyruvate: step 5/7. Functionally, catalyzes the specific phosphorylation of the 3-hydroxyl group of shikimic acid using ATP as a cosubstrate. The sequence is that of Shikimate kinase from Saccharopolyspora erythraea (strain ATCC 11635 / DSM 40517 / JCM 4748 / NBRC 13426 / NCIMB 8594 / NRRL 2338).